The primary structure comprises 502 residues: Histidine--tRNA ligase (502 aa).

The protein belongs to the class-II aminoacyl-tRNA synthetase family. In terms of assembly, homodimer.

It localises to the cytoplasm. It carries out the reaction tRNA(His) + L-histidine + ATP = L-histidyl-tRNA(His) + AMP + diphosphate + H(+). The protein is Histidine--tRNA ligase of Brucella ovis (strain ATCC 25840 / 63/290 / NCTC 10512).